Here is a 1170-residue protein sequence, read N- to C-terminus: DNA excision repair protein ERCC-5 (1170 aa).

An N-domain region spans residues 1–78 (MGVQGLWKLL…RIRPIFVFDG (78 aa)). Residue lysine 8 is modified to N6-acetyllysine. Residue aspartate 30 participates in Mg(2+) binding. The DNA-binding; may bind to the undamaged single-strand DNA of the DNA repair bubble stretch occupies residues 31–67 (ISIWLNQALKGVRDSHGNVIENAHLLTLFHRLCKLLF). Position 77 (aspartate 77) interacts with Mg(2+). The tract at residues 79 to 784 (DAPLLKKQTL…LRLFGVPYIQ (706 aa)) is spacer region. Disordered regions lie at residues 304 to 479 (DSES…RCDT), 520 to 587 (HVSG…PKAC), and 600 to 701 (LENA…ECLL). Positions 306–323 (ESLPSSSNVHSVSSNLKS) are enriched in low complexity. Basic and acidic residues-rich tracts occupy residues 324–336 (SPHEKVKPEREPE) and 363–373 (SREGRQSKERN). The residue at position 384 (serine 384) is a Phosphoserine. Over residues 455 to 474 (TSGSSANGQTDSAHSFTTAS) the composition is skewed to polar residues. Positions 539-551 (THSDQGIDIHPED) are enriched in basic and acidic residues. The span at 659-676 (SVVSNSELQTESSEASTH) shows a compositional bias: polar residues. Basic and acidic residues predominate over residues 677-698 (LSEKDAEEPRETLEEGTSRDTE). Serine 704 and serine 705 each carry phosphoserine. Positions 785-880 (APMEAEAQCA…VTAMEILNEF (96 aa)) are I-domain. Residues glutamate 788, glutamate 790, aspartate 809, and aspartate 811 each contribute to the Mg(2+) site. The tract at residues 819–835 (HVYKNFFNKNKFVEYYQ) is DNA-binding; may bind to the undamaged single-strand DNA of the DNA repair bubble. Residues 847–879 (RNKLINLAYLLGSDYTEGIPTVGCVTAMEILNE) are DNA-binding; H2TH (helix-2turn-helix) motif which binds double-stranded DNA. Aspartate 860 provides a ligand contact to Mg(2+). Residues 911–917 (TKVKKKL) form a DNA-binding; may bind double-stranded DNA region. The tract at residues 980 to 1008 (LKHLNAHQTQLRIDSFFRLAQQEKQDAKL) is interaction with PCNA. The interaction with ERCC6/CSB stretch occupies residues 1010-1170 (KSHRLNRAVT…KSMKRRKKKT (161 aa)). A disordered region spans residues 1033 to 1146 (LTKVTEALDD…DDEDKAKTVL (114 aa)). Residues 1041 to 1060 (DDAKGKTQKRELPYKKETSV) show a composition bias toward basic and acidic residues. The short motif at 1049–1065 (KRELPYKKETSVPKRRR) is the Nuclear localization signal 1 element. Over residues 1094-1110 (SVMSARQRSAAESSKIS) the composition is skewed to polar residues. The short motif at 1153–1170 (FGKKKLKLKSMKRRKKKT) is the Nuclear localization signal 2 element.

The protein belongs to the XPG/RAD2 endonuclease family. XPG subfamily. In terms of assembly, monomer. Homodimer. Component of the homologous recombination repair (HR) complex composed of ERCC5/XPG, BRCA2, PALB2, DSS1 and RAD51. Within the complex, interacts with BRCA2 and PALB2. Interacts with RNA polymerase II. Interacts (via C-terminus) with ERCC6/CSB; the interaction stimulates ERCC6/CSB binding to the DNA repair bubble and ERCC6/CSB ATPase activity. May form a complex composed of RNA polymerase II, ERCC6/CSB and ERCC5/XPG which associates with the DNA repair bubble during transcription-coupled nucleotide excision repair. Interacts with BRCA1; the interaction promotes the release of BRCA1 from DNA. Interacts with PCNA. Interacts with NTHL1; the interaction stimulates NTHL1 activity and NTHL1 binding to its DNA substrate. Mg(2+) is required as a cofactor.

The protein localises to the nucleus. It is found in the chromosome. Its function is as follows. Single-stranded structure-specific DNA endonuclease involved in DNA excision repair. Makes the 3'incision in DNA nucleotide excision repair (NER). Binds and bends DNA repair bubble substrate and breaks base stacking at the single-strand/double-strand DNA junction of the DNA bubble. Plays a role in base excision repair (BER) by promoting the binding of DNA glycosylase NTHL1 to its substrate and increasing NTHL1 catalytic activity that removes oxidized pyrimidines from DNA. Involved in transcription-coupled nucleotide excision repair (TCR) which allows RNA polymerase II-blocking lesions to be rapidly removed from the transcribed strand of active genes. Functions during the initial step of TCR in cooperation with ERCC6/CSB to recognized stalled RNA polymerase II. Also, stimulates ERCC6/CSB binding to the DNA repair bubble and ERCC6/CSB ATPase activity. Required for DNA replication fork maintenance and preservation of genomic stability. Involved in homologous recombination repair (HRR) induced by DNA replication stress by recruiting RAD51, BRCA2, and PALB2 to the damaged DNA site. During HRR, binds to the replication fork with high specificity and stabilizes it. Also, acts upstream of HRR, to promote the release of BRCA1 from DNA. In Mus musculus (Mouse), this protein is DNA excision repair protein ERCC-5 (Ercc5).